The primary structure comprises 376 residues: Putative glutamate--cysteine ligase 2-1 (376 aa).

It belongs to the glutamate--cysteine ligase type 2 family. YbdK subfamily.

The catalysed reaction is L-cysteine + L-glutamate + ATP = gamma-L-glutamyl-L-cysteine + ADP + phosphate + H(+). In terms of biological role, ATP-dependent carboxylate-amine ligase which exhibits weak glutamate--cysteine ligase activity. The sequence is that of Putative glutamate--cysteine ligase 2-1 from Mycobacterium sp. (strain JLS).